A 143-amino-acid polypeptide reads, in one-letter code: Large ribosomal subunit protein uL11 (143 aa).

Belongs to the universal ribosomal protein uL11 family. Part of the ribosomal stalk of the 50S ribosomal subunit. Interacts with L10 and the large rRNA to form the base of the stalk. L10 forms an elongated spine to which L12 dimers bind in a sequential fashion forming a multimeric L10(L12)X complex. One or more lysine residues are methylated.

In terms of biological role, forms part of the ribosomal stalk which helps the ribosome interact with GTP-bound translation factors. The protein is Large ribosomal subunit protein uL11 of Borreliella burgdorferi (strain ATCC 35210 / DSM 4680 / CIP 102532 / B31) (Borrelia burgdorferi).